A 256-amino-acid chain; its full sequence is Agamous-like MADS-box protein AGL18 (256 aa).

Residues 1-61 (MGRGRIEIKK…GKIYDFSSVC (61 aa)) enclose the MADS-box domain. One can recognise a K-box domain in the interval 94 to 184 (NEAVLRNDDS…RKQVEMLGRG (91 aa)). Positions 179-232 (EMLGRGSGPKVLNERPQDSSPEADPESSSSEEDENDNEEHHSDTSLQLGLSSTG) are disordered. Residues 199 to 215 (PEADPESSSSEEDENDN) are compositionally biased toward acidic residues. Residues 222–232 (TSLQLGLSSTG) are compositionally biased toward polar residues.

Mostly expressed in pollen, roots, flowers and siliques, and to a lower extent, in stems and leaves. Expressed in the endosperm and in developing male and female gametophytes. Also present in seedlings.

The protein resides in the nucleus. Functionally, probable transcription factor involved in the negative regulation of flowering, probably through the photoperiodic pathway. Prevents premature flowering. Downstream regulator of a subset of the MIKC* MADS-controlled genes required during pollen maturation. The polypeptide is Agamous-like MADS-box protein AGL18 (AGL18) (Arabidopsis thaliana (Mouse-ear cress)).